The primary structure comprises 207 residues: Small ribosomal subunit protein uS4 (207 aa).

Residues 31–55 (KCKLDSKPGQHGRTSGARTSDYGTQ) form a disordered region. The segment covering 42 to 53 (GRTSGARTSDYG) has biased composition (polar residues). The S4 RNA-binding domain maps to 97-160 (SRLDNVVYRM…KKQARIVEAL (64 aa)).

The protein belongs to the universal ribosomal protein uS4 family. As to quaternary structure, part of the 30S ribosomal subunit. Contacts protein S5. The interaction surface between S4 and S5 is involved in control of translational fidelity.

Functionally, one of the primary rRNA binding proteins, it binds directly to 16S rRNA where it nucleates assembly of the body of the 30S subunit. In terms of biological role, with S5 and S12 plays an important role in translational accuracy. The protein is Small ribosomal subunit protein uS4 of Burkholderia ambifaria (strain ATCC BAA-244 / DSM 16087 / CCUG 44356 / LMG 19182 / AMMD) (Burkholderia cepacia (strain AMMD)).